Reading from the N-terminus, the 558-residue chain is MLEFAVSAPFDPAFDISSSIVPATFPWLSLSILFPIVGAFIVPFVPDDGDGKQVRWFALGIALTTFLITAAAYLTGYDPSYSGLQLSERVSWLPNLGLTWAVGADGLSMPLILLTSFITALAVLAAWPVTFKPKLFFFLILAMDGGQIAVFAVQDMLLFFLAWELELLPVYLLLAIWGGKKRQYAATKFILYTAGSSLFILLAALAMGFFGGGVPNFEYSVLAQKGFSTGFELLCYAGLLIAFGVKLPIVPLHTWLPDAHGEATAPVHMLLAGILLKMGGYALMRFNAEILPVAHAQFAPLLVVLGVVNIIYAALTSFAQRNLKRKIAYSSISHMGFVLIGIGSFSELGTSGAMLQMISHGLIGASLFFLVGATYDRTHTLQLDEMGGIGQKMRIMFALWTVCCLASLALPGMSGFVSELMVFAGFATDEAYTLSFRIVIDGLAAIGVILTPIYLLSMLREIFFGKENSELVSHSNLVDSEPREVYIIGCLLVPIIGIGLYPKLMTDSYSNTISALVRRDVDAMERITRPTAPLIRSTSLVPAVFSAPKLTQASQPVS.

15 helical membrane-spanning segments follow: residues 25-45, 56-76, 90-110, 111-131, 133-153, 157-177, 189-209, 230-250, 264-284, 298-318, 327-347, 353-373, 397-417, 438-458, and 485-505; these read FPWL…VPFV, WFAL…YLTG, VSWL…LSMP, LILL…PVTF, PKLF…VFAV, LLFF…LAIW, FILY…AMGF, GFEL…LPIV, TAPV…YALM, FAPL…LTSF, IAYS…SFSE, AMLQ…LVGA, FALW…SGFV, IVID…LLSM, and VYII…PKLM.

The protein belongs to the complex I subunit 4 family.

The protein resides in the cellular thylakoid membrane. It catalyses the reaction a plastoquinone + NADH + (n+1) H(+)(in) = a plastoquinol + NAD(+) + n H(+)(out). It carries out the reaction a plastoquinone + NADPH + (n+1) H(+)(in) = a plastoquinol + NADP(+) + n H(+)(out). In terms of biological role, NDH-1 shuttles electrons from NAD(P)H, via FMN and iron-sulfur (Fe-S) centers, to quinones in the respiratory chain. The immediate electron acceptor for the enzyme in this species is believed to be plastoquinone. Couples the redox reaction to proton translocation (for every two electrons transferred, four hydrogen ions are translocated across the cytoplasmic membrane), and thus conserves the redox energy in a proton gradient. In Synechococcus sp. (strain CC9311), this protein is NAD(P)H-quinone oxidoreductase chain 4.